A 284-amino-acid chain; its full sequence is Glutamate 5-kinase 2 (284 aa).

K26 contacts ATP. Substrate is bound by residues S67, D154, and N166. ATP is bound by residues 186–187 (SD) and 228–234 (SGGMVTK).

The protein belongs to the glutamate 5-kinase family.

The protein resides in the cytoplasm. It carries out the reaction L-glutamate + ATP = L-glutamyl 5-phosphate + ADP. It participates in amino-acid biosynthesis; L-proline biosynthesis; L-glutamate 5-semialdehyde from L-glutamate: step 1/2. Catalyzes the transfer of a phosphate group to glutamate to form L-glutamate 5-phosphate. This Mesorhizobium japonicum (strain LMG 29417 / CECT 9101 / MAFF 303099) (Mesorhizobium loti (strain MAFF 303099)) protein is Glutamate 5-kinase 2.